A 504-amino-acid chain; its full sequence is 2,3-bisphosphoglycerate-independent phosphoglycerate mutase (504 aa).

Asp9 and Ser59 together coordinate Mn(2+). The active-site Phosphoserine intermediate is Ser59. Substrate contacts are provided by residues His120, Arg149–Asp150, Arg181, Arg187, Arg253–Arg256, and Lys326. Positions 393, 397, 434, 435, and 451 each coordinate Mn(2+).

This sequence belongs to the BPG-independent phosphoglycerate mutase family. Requires Mn(2+) as cofactor.

The enzyme catalyses (2R)-2-phosphoglycerate = (2R)-3-phosphoglycerate. It functions in the pathway carbohydrate degradation; glycolysis; pyruvate from D-glyceraldehyde 3-phosphate: step 3/5. Catalyzes the interconversion of 2-phosphoglycerate and 3-phosphoglycerate. The chain is 2,3-bisphosphoglycerate-independent phosphoglycerate mutase from Haloquadratum walsbyi (strain DSM 16790 / HBSQ001).